The chain runs to 169 residues: Shikimate kinase (169 aa).

13–18 contributes to the ATP binding site; it reads GAGKST. Ser17 contributes to the Mg(2+) binding site. 3 residues coordinate substrate: Asp35, Arg59, and Gly80. An ATP-binding site is contributed by Arg117. Arg136 lines the substrate pocket. An ATP-binding site is contributed by Arg153.

It belongs to the shikimate kinase family. As to quaternary structure, monomer. Mg(2+) is required as a cofactor.

It localises to the cytoplasm. The enzyme catalyses shikimate + ATP = 3-phosphoshikimate + ADP + H(+). It participates in metabolic intermediate biosynthesis; chorismate biosynthesis; chorismate from D-erythrose 4-phosphate and phosphoenolpyruvate: step 5/7. In terms of biological role, catalyzes the specific phosphorylation of the 3-hydroxyl group of shikimic acid using ATP as a cosubstrate. The protein is Shikimate kinase of Corynebacterium glutamicum (strain ATCC 13032 / DSM 20300 / JCM 1318 / BCRC 11384 / CCUG 27702 / LMG 3730 / NBRC 12168 / NCIMB 10025 / NRRL B-2784 / 534).